The chain runs to 158 residues: UPF0262 protein Rsph17029_2283 (158 aa).

The protein belongs to the UPF0262 family.

The polypeptide is UPF0262 protein Rsph17029_2283 (Cereibacter sphaeroides (strain ATCC 17029 / ATH 2.4.9) (Rhodobacter sphaeroides)).